We begin with the raw amino-acid sequence, 548 residues long: ETS domain-containing transcription factor ERF (548 aa).

A phosphothreonine mark is found at threonine 3 and threonine 7. Phosphoserine occurs at positions 20 and 24. Positions 27-107 form a DNA-binding region, ETS; it reads IQLWHFILEL…KGKRFTYKFN (81 aa). 3 disordered regions span residues 130–169, 184–225, and 280–304; these read QSAPPVPSGGSHFRFPPSTPSEVLSPTEDPRSPPACSSSS, GSVS…LARL, and SPTLSPMYPSGGGGPSGSGGGSHFS. A phosphoserine mark is found at serine 185 and serine 190. Positions 289–301 are enriched in gly residues; the sequence is SGGGGPSGSGGGS. Phosphoserine is present on serine 327. The segment at 342–478 is disordered; the sequence is PQRPDKCPLP…GEAPGASQCM (137 aa). A compositionally biased stretch (pro residues) spans 348 to 361; that stretch reads CPLPPMAPETPPVP. 2 stretches are compositionally biased toward low complexity: residues 362-373 and 394-403; these read SSASSSSSSSSS and KAVAGADKSG. 2 positions are modified to phosphoserine: serine 431 and serine 435. Acidic residues predominate over residues 431 to 451; that stretch reads SEGESEEVEVTDISDEDEEDG. Residue threonine 441 is modified to Phosphothreonine. Serine 444 is modified (phosphoserine). Glycyl lysine isopeptide (Lys-Gly) (interchain with G-Cter in SUMO2) cross-links involve residues lysine 465, lysine 481, and lysine 512. The interval 492–548 is disordered; the sequence is CRLEGGGGPAGGFEDEGEDKKVRGEGPGEAGGPLTPRRVSSDLQHATAQLSLEHRDS. Threonine 526 carries the phosphothreonine; by MAPK1 modification. A phosphoserine mark is found at serine 531, serine 532, and serine 548. Positions 532–541 are enriched in polar residues; sequence SDLQHATAQL.

This sequence belongs to the ETS family. Phosphorylated by multiple kinases including MAPK1/ERK2 at THR-526. Phosphorylation regulates the activity of ERF. Highest levels in testis, ovary, pancreas, and heart.

The protein localises to the nucleus. Functionally, potent transcriptional repressor that binds to the H1 element of the Ets2 promoter. May regulate other genes involved in cellular proliferation. Required for extraembryonic ectoderm differentiation, ectoplacental cone cavity closure, and chorioallantoic attachment. May be important for regulating trophoblast stem cell differentiation. The protein is ETS domain-containing transcription factor ERF (ERF) of Homo sapiens (Human).